Reading from the N-terminus, the 485-residue chain is Aspartyl/glutamyl-tRNA(Asn/Gln) amidotransferase subunit B (485 aa).

This sequence belongs to the GatB/GatE family. GatB subfamily. Heterotrimer of A, B and C subunits.

It catalyses the reaction L-glutamyl-tRNA(Gln) + L-glutamine + ATP + H2O = L-glutaminyl-tRNA(Gln) + L-glutamate + ADP + phosphate + H(+). The enzyme catalyses L-aspartyl-tRNA(Asn) + L-glutamine + ATP + H2O = L-asparaginyl-tRNA(Asn) + L-glutamate + ADP + phosphate + 2 H(+). In terms of biological role, allows the formation of correctly charged Asn-tRNA(Asn) or Gln-tRNA(Gln) through the transamidation of misacylated Asp-tRNA(Asn) or Glu-tRNA(Gln) in organisms which lack either or both of asparaginyl-tRNA or glutaminyl-tRNA synthetases. The reaction takes place in the presence of glutamine and ATP through an activated phospho-Asp-tRNA(Asn) or phospho-Glu-tRNA(Gln). This chain is Aspartyl/glutamyl-tRNA(Asn/Gln) amidotransferase subunit B, found in Borrelia duttonii (strain Ly).